We begin with the raw amino-acid sequence, 107 residues long: Protein KleE (107 aa).

The protein is Protein KleE (kleE) of Escherichia coli.